Reading from the N-terminus, the 279-residue chain is MAYDAFGKPGYGPDFNSAFSPGMGGGAGFNEYDQSSQPSVDRQQGAGNKLRPVTIKQILNASQVHADAEFKIDGVEVGQVTFVGVLRNIHAQTTNTTYQIEDGTGMIEVRHWEHIDALSELATDTYVRVYGNIKIFSGKIYIASQYIRTIKDHNEVHFHFLEAIAVHLHFTQKANAVNGANAPGYGTSNALGYNNISSNGAANSLEQKLAEYSLTPAQMTVMQAIHSAPETNEGVHVRQLAQSVGPGIDLTAVTDFLQQEGIIYTTIDENHFKSVLQDQ.

Residues 26 to 47 are disordered; that stretch reads GAGFNEYDQSSQPSVDRQQGAG. Residues 32–46 are compositionally biased toward polar residues; sequence YDQSSQPSVDRQQGA. Residues 80 to 140 constitute a DNA-binding region (OB); it reads VTFVGVLRNI…GNIKIFSGKI (61 aa).

It belongs to the replication factor A protein 2 family. Heterotrimer of 68, 30, and 12 kDa chains. Phosphorylated in a cell cycle-dependent manner. Hypophosphorylated in G1, becomes phosphorylated at the G1/S boundary, it is maintained in this state through the M phase.

The protein resides in the nucleus. In terms of biological role, binds to single-stranded sequences. This is Replication factor A protein 2 (ssb2) from Schizosaccharomyces pombe (strain 972 / ATCC 24843) (Fission yeast).